A 592-amino-acid chain; its full sequence is Arginine--tRNA ligase (592 aa).

The short motif at 112 to 122 (VNPNKELHVGH) is the 'HIGH' region element.

It belongs to the class-I aminoacyl-tRNA synthetase family. Monomer.

It localises to the cytoplasm. It carries out the reaction tRNA(Arg) + L-arginine + ATP = L-arginyl-tRNA(Arg) + AMP + diphosphate. This is Arginine--tRNA ligase from Thermus thermophilus (strain ATCC BAA-163 / DSM 7039 / HB27).